We begin with the raw amino-acid sequence, 144 residues long: Snake venom vascular endothelial growth factor toxin cratrin (144 aa).

An N-terminal signal peptide occupies residues 1–24; that stretch reads MAVYLLAVAILFCIQGWPSGTVQG. Q25 bears the Pyrrolidone carboxylic acid mark. 3 cysteine pairs are disulfide-bonded: C38–C80, C69–C115, and C73–C117. The segment at 119–144 is disordered; sequence PRSTVNNGKRKKNPKEGEPRAKFPLV. The span at 132–144 shows a compositional bias: basic and acidic residues; it reads PKEGEPRAKFPLV.

The protein belongs to the PDGF/VEGF growth factor family. Snake venom VEGF subfamily. In terms of assembly, homodimer; disulfide-linked. Interacts with VEGF receptor-1 (FLT1) with a high affinity, whereas it binds to VEGF receptor-2 (KDR) with a low affinity. Does not bind VEGF receptor-3 (FLT4). As to expression, expressed by the venom gland.

The protein localises to the secreted. Functionally, snake venom VEGFs that may contribute to venom dispersion and prey subjugation by inducing vascular permeability and hypotension. This protein induces an increase in capillary permeability after intradermal injection, as well as a drastic hypotensive effect after intravenous injection. The hypotension is mediated by nitric oxide (NO), which is produced by VEGF-activated endothelium NO synthase. Also induces angiogenesis in vitro. Like other crotalid VEGFs, this protein interacts with VEGF receptor-1 (FLT1) with a high affinity, whereas it binds to VEGF receptor-2 (KDR) with a low affinity. The sequence is that of Snake venom vascular endothelial growth factor toxin cratrin from Crotalus atrox (Western diamondback rattlesnake).